We begin with the raw amino-acid sequence, 119 residues long: Holo-[acyl-carrier-protein] synthase (119 aa).

Mg(2+)-binding residues include D8 and E58.

It belongs to the P-Pant transferase superfamily. AcpS family. Mg(2+) is required as a cofactor.

It localises to the cytoplasm. The catalysed reaction is apo-[ACP] + CoA = holo-[ACP] + adenosine 3',5'-bisphosphate + H(+). Functionally, transfers the 4'-phosphopantetheine moiety from coenzyme A to a Ser of acyl-carrier-protein. The polypeptide is Holo-[acyl-carrier-protein] synthase (Bacillus cereus (strain B4264)).